Reading from the N-terminus, the 519-residue chain is (3S,6E)-nerolidol synthase 1 (519 aa).

Asp-273, Asp-277, Asp-417, Ser-421, and Glu-425 together coordinate Mg(2+). The DDXXD motif signature appears at 273-277 (DDIFD).

Belongs to the terpene synthase family. Tpsg subfamily. Requires Mg(2+) as cofactor. It depends on Mn(2+) as a cofactor. As to expression, expressed in receptacle tissue. Not detected in leaves or green fruit.

Its subcellular location is the cytoplasm. It is found in the cytosol. It catalyses the reaction (2E,6E)-farnesyl diphosphate + H2O = (3S,6E)-nerolidol + diphosphate. Its pathway is secondary metabolite biosynthesis; terpenoid biosynthesis. Involved in monoterpene (C10) and sesquiterpene (C15) biosynthesis. Converts geranyl diphosphate (GPP) into S-linalool and farnesyl diphosphate (FPP) into (3S)-E-nerolidol. Exclusively present and highly expressed in the fruit of cultivated (octaploid) varieties. In Fragaria ananassa (Strawberry), this protein is (3S,6E)-nerolidol synthase 1.